Here is a 311-residue protein sequence, read N- to C-terminus: Serine hydrolase-like protein (311 aa).

One can recognise an AB hydrolase-1 domain in the interval 27 to 227 (PPVLCLHGWL…FVSKEMFVHS (201 aa)). Ser102 is an active-site residue. Phosphoserine is present on Ser210.

The protein belongs to the AB hydrolase superfamily. In terms of tissue distribution, ubiquitous. High protein expression in skeletal and cardiac muscle.

It localises to the cytoplasm. Its subcellular location is the perinuclear region. The protein localises to the peroxisome. Probable serine hydrolase. May be related to cell muscle hypertrophy. The polypeptide is Serine hydrolase-like protein (Serhl) (Mus musculus (Mouse)).